The primary structure comprises 138 residues: Putative pre-16S rRNA nuclease (138 aa).

The protein belongs to the YqgF nuclease family.

It is found in the cytoplasm. In terms of biological role, could be a nuclease involved in processing of the 5'-end of pre-16S rRNA. This is Putative pre-16S rRNA nuclease from Salmonella dublin (strain CT_02021853).